A 454-amino-acid polypeptide reads, in one-letter code: Histidine--tRNA ligase (454 aa).

This sequence belongs to the class-II aminoacyl-tRNA synthetase family. Homodimer.

The protein resides in the cytoplasm. It catalyses the reaction tRNA(His) + L-histidine + ATP = L-histidyl-tRNA(His) + AMP + diphosphate + H(+). The polypeptide is Histidine--tRNA ligase (Bacteroides fragilis (strain ATCC 25285 / DSM 2151 / CCUG 4856 / JCM 11019 / LMG 10263 / NCTC 9343 / Onslow / VPI 2553 / EN-2)).